Reading from the N-terminus, the 194-residue chain is Leucyl/phenylalanyl-tRNA--protein transferase (194 aa).

The protein belongs to the L/F-transferase family.

Its subcellular location is the cytoplasm. It catalyses the reaction N-terminal L-lysyl-[protein] + L-leucyl-tRNA(Leu) = N-terminal L-leucyl-L-lysyl-[protein] + tRNA(Leu) + H(+). It carries out the reaction N-terminal L-arginyl-[protein] + L-leucyl-tRNA(Leu) = N-terminal L-leucyl-L-arginyl-[protein] + tRNA(Leu) + H(+). The enzyme catalyses L-phenylalanyl-tRNA(Phe) + an N-terminal L-alpha-aminoacyl-[protein] = an N-terminal L-phenylalanyl-L-alpha-aminoacyl-[protein] + tRNA(Phe). In terms of biological role, functions in the N-end rule pathway of protein degradation where it conjugates Leu, Phe and, less efficiently, Met from aminoacyl-tRNAs to the N-termini of proteins containing an N-terminal arginine or lysine. The protein is Leucyl/phenylalanyl-tRNA--protein transferase of Chlorobaculum parvum (strain DSM 263 / NCIMB 8327) (Chlorobium vibrioforme subsp. thiosulfatophilum).